Here is a 347-residue protein sequence, read N- to C-terminus: S-adenosylmethionine:tRNA ribosyltransferase-isomerase (347 aa).

The protein belongs to the QueA family. As to quaternary structure, monomer.

The protein localises to the cytoplasm. It catalyses the reaction 7-aminomethyl-7-carbaguanosine(34) in tRNA + S-adenosyl-L-methionine = epoxyqueuosine(34) in tRNA + adenine + L-methionine + 2 H(+). Its pathway is tRNA modification; tRNA-queuosine biosynthesis. In terms of biological role, transfers and isomerizes the ribose moiety from AdoMet to the 7-aminomethyl group of 7-deazaguanine (preQ1-tRNA) to give epoxyqueuosine (oQ-tRNA). This is S-adenosylmethionine:tRNA ribosyltransferase-isomerase from Erythrobacter litoralis (strain HTCC2594).